Consider the following 129-residue polypeptide: Large ribosomal subunit protein uL22 (129 aa).

It belongs to the universal ribosomal protein uL22 family. Part of the 50S ribosomal subunit.

Its function is as follows. This protein binds specifically to 23S rRNA; its binding is stimulated by other ribosomal proteins, e.g. L4, L17, and L20. It is important during the early stages of 50S assembly. It makes multiple contacts with different domains of the 23S rRNA in the assembled 50S subunit and ribosome. The globular domain of the protein is located near the polypeptide exit tunnel on the outside of the subunit, while an extended beta-hairpin is found that lines the wall of the exit tunnel in the center of the 70S ribosome. The sequence is that of Large ribosomal subunit protein uL22 from Agrobacterium fabrum (strain C58 / ATCC 33970) (Agrobacterium tumefaciens (strain C58)).